A 150-amino-acid chain; its full sequence is D-aminoacyl-tRNA deacylase (150 aa).

The Gly-cisPro motif, important for rejection of L-amino acids motif lies at Gly-136–Pro-137.

The protein belongs to the DTD family. In terms of assembly, homodimer.

It localises to the cytoplasm. It carries out the reaction glycyl-tRNA(Ala) + H2O = tRNA(Ala) + glycine + H(+). The enzyme catalyses a D-aminoacyl-tRNA + H2O = a tRNA + a D-alpha-amino acid + H(+). Functionally, an aminoacyl-tRNA editing enzyme that deacylates mischarged D-aminoacyl-tRNAs. Also deacylates mischarged glycyl-tRNA(Ala), protecting cells against glycine mischarging by AlaRS. Acts via tRNA-based rather than protein-based catalysis; rejects L-amino acids rather than detecting D-amino acids in the active site. By recycling D-aminoacyl-tRNA to D-amino acids and free tRNA molecules, this enzyme counteracts the toxicity associated with the formation of D-aminoacyl-tRNA entities in vivo and helps enforce protein L-homochirality. The protein is D-aminoacyl-tRNA deacylase of Macrococcus caseolyticus (strain JCSC5402) (Macrococcoides caseolyticum).